The following is a 128-amino-acid chain: MSDPVMDAYTQAYNSSGNMVQAFGVISESGQVLWQSNNWDLTADASTLMSAVKSRASSVIQNQVKYSTMRSTPESLVARNVQGSGILILTKIDTTSDRWVVAWADAQAQPDGVYVDVDRAAKTLRGKI.

Belongs to the Asgard profilin family.

The protein resides in the cytoplasm. Its subcellular location is the cytoskeleton. Has no profilin activity against rabbit actin. This is Thor profilin from Thorarchaeota archaeon (strain AB_25).